A 247-amino-acid polypeptide reads, in one-letter code: Neurotrophic factor BDNF precursor form (247 aa).

Residues 1 to 18 form the signal peptide; it reads MTILFLTMVISYFGCMKA. Residues 19–128 constitute a propeptide that is removed on maturation; it reads APMKEANARG…AANMSMRVRR (110 aa). A glycan (N-linked (GlcNAc...) asparagine) is linked at asparagine 121. Disulfide bonds link cysteine 141–cysteine 208, cysteine 186–cysteine 237, and cysteine 196–cysteine 239.

It belongs to the NGF-beta family. Monomers and homodimers. Binds to NTRK2/TRKB. Can form heterodimers with other neurotrophin family members, such as NTF3 and NTF4 (in vitro), but the physiological relevance of this is not clear. BDNF precursor form: interacts with the heterodimer formed by NGFR and SORCS2. Mature BDNF has much lower affinity for the heterodimer formed by NGFR and SORCS2. Post-translationally, N-glycosylated and glycosulfated, contrary to mature BDNF. Mature BDNF is produced by proteolytic removal of the propeptide, catalyzed by a FURIN family member. In addition, the precursor form is proteolytically cleaved within the propeptide, but this is not an obligatory intermediate for the production of mature BDNF. Can be converted into mature BDNF by plasmin (PLG).

It localises to the secreted. Functionally, important signaling molecule that activates signaling cascades downstream of NTRK2. During development, promotes the survival and differentiation of selected neuronal populations of the peripheral and central nervous systems. Participates in axonal growth, pathfinding and in the modulation of dendritic growth and morphology. Major regulator of synaptic transmission and plasticity at adult synapses in many regions of the CNS. The versatility of BDNF is emphasized by its contribution to a range of adaptive neuronal responses including long-term potentiation (LTP), long-term depression (LTD), certain forms of short-term synaptic plasticity, as well as homeostatic regulation of intrinsic neuronal excitability. Its function is as follows. Important signaling molecule that activates signaling cascades downstream of NTRK2. Activates signaling cascades via the heterodimeric receptor formed by NGFR and SORCS2. Signaling via NGFR and SORCS2 plays a role in synaptic plasticity and long-term depression (LTD). Binding to NGFR and SORCS2 promotes neuronal apoptosis. Promotes neuronal growth cone collapse. The chain is Neurotrophic factor BDNF precursor form (BDNF) from Equus caballus (Horse).